A 181-amino-acid chain; its full sequence is MDIQTEMTAPPLSGGLDPAQARDAADAVRNAIYRATILLDSQKWDEWLALCADNFVYDIKAWSPEINYDMTYLHGSRKDLEALIRLLPKHNTDHSPLTRHTTIYTVDVADEGATAKGVSAFIVFQHLLDGTNSHIDAGESRLFLVGKYYDTFRIENGQALFTSRETRLENRRLDKGSHWPI.

This sequence belongs to the bacterial ring-hydroxylating dioxygenase beta subunit family. The MSA monooxygenase system consists of 4 proteins: the 2 subunits of the hydroxylase component (MsmA and MsmB), a ferredoxin (MsmC) and a ferredoxin reductase (MsmD). The hydroxylase component consists of a 3 alpha (MsmA) and 3 beta (MsmB) subunits.

It is found in the cytoplasm. The catalysed reaction is methanesulfonate + NADH + O2 = sulfite + formaldehyde + NAD(+) + H2O. MSAMO is inhibited by metal chelators (such as bathophenanthroline, bathocuprione, neocuprione, alpha-alpha-dipyridil and sodium EDTA) and by sodium azide, sodium arsenate and potassium cyanide. In terms of biological role, methanesulfonate monooxygenase (MSAMO) mediates the primary degradation of methanesulfonic acid (MSA) to produce formaldehyd and inorganic sulfite by initial hydroxylation of the carbon atom prior to spontaneous cleavage of the unstable hydroxymethanesulfonic acid. MSAMO has a restricted substrate range that includes only the short-chain aliphatic sulfonates (methane- to butanesulfonate) and excludes all larger molecules, such as arylsulfonates and aromatic sulfonates. All MSAMO components are required for enzyme activity. This chain is Methanesulfonate monooxygenase hydroxylase subunit beta, found in Methylosulfonomonas methylovora.